We begin with the raw amino-acid sequence, 735 residues long: Translation initiation factor IF-2 (735 aa).

Basic and acidic residues-rich tracts occupy residues 52 to 66 and 101 to 117; these read VNSE…EKPK and KGKE…EKKL. The disordered stretch occupies residues 52 to 154; sequence VNSEKKAEKK…PAKKEKELPK (103 aa). The span at 121 to 133 shows a compositional bias: basic residues; it reads AKKKGKGPMKGKK. The span at 134–145 shows a compositional bias: low complexity; it reads QAAPASKQAQQP. The tr-type G domain maps to 236–405; that stretch reads ERPPVVTIMG…LLVSEMEELK (170 aa). A G1 region spans residues 245–252; it reads GHVDHGKT. 245–252 is a GTP binding site; that stretch reads GHVDHGKT. The segment at 270-274 is G2; the sequence is GITQH. The interval 291 to 294 is G3; that stretch reads DTPG. GTP contacts are provided by residues 291–295 and 345–348; these read DTPGH and NKMD. Positions 345 to 348 are G4; the sequence is NKMD. The tract at residues 381-383 is G5; it reads SAK.

Belongs to the TRAFAC class translation factor GTPase superfamily. Classic translation factor GTPase family. IF-2 subfamily.

It localises to the cytoplasm. In terms of biological role, one of the essential components for the initiation of protein synthesis. Protects formylmethionyl-tRNA from spontaneous hydrolysis and promotes its binding to the 30S ribosomal subunits. Also involved in the hydrolysis of GTP during the formation of the 70S ribosomal complex. This is Translation initiation factor IF-2 from Geobacillus thermodenitrificans (strain NG80-2).